Reading from the N-terminus, the 350-residue chain is Biotin synthase (350 aa).

The region spanning 41–268 (NEVQISRLLS…LSRVRLSAGR (228 aa)) is the Radical SAM core domain. [4Fe-4S] cluster-binding residues include Cys-56, Cys-60, and Cys-63. 4 residues coordinate [2Fe-2S] cluster: Cys-100, Cys-131, Cys-191, and Arg-263.

Belongs to the radical SAM superfamily. Biotin synthase family. In terms of assembly, homodimer. Requires [4Fe-4S] cluster as cofactor. The cofactor is [2Fe-2S] cluster.

It catalyses the reaction (4R,5S)-dethiobiotin + (sulfur carrier)-SH + 2 reduced [2Fe-2S]-[ferredoxin] + 2 S-adenosyl-L-methionine = (sulfur carrier)-H + biotin + 2 5'-deoxyadenosine + 2 L-methionine + 2 oxidized [2Fe-2S]-[ferredoxin]. Its pathway is cofactor biosynthesis; biotin biosynthesis; biotin from 7,8-diaminononanoate: step 2/2. In terms of biological role, catalyzes the conversion of dethiobiotin (DTB) to biotin by the insertion of a sulfur atom into dethiobiotin via a radical-based mechanism. This Shewanella putrefaciens (strain CN-32 / ATCC BAA-453) protein is Biotin synthase.